The chain runs to 249 residues: Cell division protein DivIB (249 aa).

Residues 1–19 (MKEENEYIVKRRKKRRRKR) lie on the Cytoplasmic side of the membrane. The chain crosses the membrane as a helical span at residues 20–40 (ITIFLFLLICILVTLCLKLPY). Residues 41–109 (FNIKYINVEG…NTIDIIVKER (69 aa)) form the POTRA domain. At 41 to 249 (FNIKYINVEG…KGNPVYSLQQ (209 aa)) the chain is on the extracellular side.

This sequence belongs to the FtsQ/DivIB family. DivIB subfamily.

The protein localises to the cell membrane. Its function is as follows. Cell division protein that may be involved in stabilizing or promoting the assembly of the division complex. The sequence is that of Cell division protein DivIB from Clostridium acetobutylicum (strain ATCC 824 / DSM 792 / JCM 1419 / IAM 19013 / LMG 5710 / NBRC 13948 / NRRL B-527 / VKM B-1787 / 2291 / W).